The sequence spans 198 residues: Imidazole glycerol phosphate synthase subunit HisH (198 aa).

The Glutamine amidotransferase type-1 domain maps to 2-198; sequence KALLIDYGSG…ALARRYFEVL (197 aa). Residue Cys80 is the Nucleophile of the active site. Catalysis depends on residues His176 and Glu178.

Heterodimer of HisH and HisF.

The protein localises to the cytoplasm. The enzyme catalyses 5-[(5-phospho-1-deoxy-D-ribulos-1-ylimino)methylamino]-1-(5-phospho-beta-D-ribosyl)imidazole-4-carboxamide + L-glutamine = D-erythro-1-(imidazol-4-yl)glycerol 3-phosphate + 5-amino-1-(5-phospho-beta-D-ribosyl)imidazole-4-carboxamide + L-glutamate + H(+). It catalyses the reaction L-glutamine + H2O = L-glutamate + NH4(+). It functions in the pathway amino-acid biosynthesis; L-histidine biosynthesis; L-histidine from 5-phospho-alpha-D-ribose 1-diphosphate: step 5/9. IGPS catalyzes the conversion of PRFAR and glutamine to IGP, AICAR and glutamate. The HisH subunit catalyzes the hydrolysis of glutamine to glutamate and ammonia as part of the synthesis of IGP and AICAR. The resulting ammonia molecule is channeled to the active site of HisF. This is Imidazole glycerol phosphate synthase subunit HisH from Thermus thermophilus (strain ATCC BAA-163 / DSM 7039 / HB27).